We begin with the raw amino-acid sequence, 61 residues long: [Thr6]-bradykinyl-Val,Asp (61 aa).

Positions 1–22 are cleaved as a signal peptide; the sequence is MSFLKKSLFLVLFLGFVSFSIC. Positions 23–50 are excised as a propeptide; sequence EEEKREDEEEENEREENKESEEKRNQEE. Residues 24 to 61 are disordered; it reads EEKREDEEEENEREENKESEEKRNQEERPPGFTPFRVD. Over residues 26–36 the composition is skewed to acidic residues; sequence KREDEEEENER. The span at 37–52 shows a compositional bias: basic and acidic residues; sequence EENKESEEKRNQEERP. Proline 53 is subject to 4-hydroxyproline; in form [Hyp3,Thr6]-bradykinyl-Val,Asp and [Hyp3,Thr6]-bradykinin.

The protein belongs to the frog skin active peptide (FSAP) family. Bradykinin-related peptide subfamily. As to expression, expressed by the skin glands.

It localises to the secreted. In terms of biological role, induces relaxation of rat smooth muscle from tail artery (EC(50)=16.8 nM) and contraction of that from ileum (EC(50)=205 nM), urinary bladder (EC(50)=895 nM) and uterus (EC(50)=60.3 nM). Binds to both bradykinin receptor B1 (BDKRB1) and B2 (BDKRB2). Its function is as follows. [Hyp3,Thr6]-bradykinin: Induces relaxation of rat smooth muscle from tail artery (EC(50)=56.7 nM) and contraction of that from ileum (EC(50)=588 nM), urinary bladder (EC(50)=4.6 uM) and uterus (EC(50)=3.9 nM). Binds to both bradykinin receptor B1 (BDKRB1) and B2 (BDKRB2). In arterial smooth muscle, the effect via BDKRB1 is stronger, in uterus, ileum and urinary bladder the effect via BDKRB2. Functionally, induces relaxation of rat smooth muscle from tail artery (EC(50)=10.8 nM) and contraction of that from ileum (EC(50)=645 nM), urinary bladder (EC(50)=1.1 uM) and uterus (EC(50)=1.2 uM). Binds to both bradykinin receptor B1 (BDKRB1) and B2 (BDKRB2). Apart from uterus smooth muscle, the effect via BDKRB2 is stronger. [Hyp3,Thr6]-bradykinyl-Val,Asp: Induces relaxation of rat smooth muscle from tail artery (EC(50)=3.5 nM) and contraction of that from ileum (EC(50)=223 nM), urinary bladder (EC(50)=1.5 uM) and uterus (EC(50)=356 nM). Binds to both bradykinin receptor B1 (BDKRB1) and B2 (BDKRB2); the effects via BDKRB2 are stronger. The sequence is that of [Thr6]-bradykinyl-Val,Asp from Agalychnis dacnicolor (Giant Mexican leaf frog).